The following is a 263-amino-acid chain: Small ribosomal subunit protein eS4 (263 aa).

The 63-residue stretch at 42–104 folds into the S4 RNA-binding domain; that stretch reads LPLIVFLRNR…TGEHFRLVYD (63 aa).

This sequence belongs to the eukaryotic ribosomal protein eS4 family.

The protein is Small ribosomal subunit protein eS4 (RPS4Y1) of Pan paniscus (Pygmy chimpanzee).